The sequence spans 703 residues: DNA ligase (703 aa).

NAD(+)-binding positions include 54–58 (DAEYD), 103–104 (SL), and E132. K134 (N6-AMP-lysine intermediate) is an active-site residue. R155, E192, K308, and K332 together coordinate NAD(+). 4 residues coordinate Zn(2+): C426, C429, C444, and C450. In terms of domain architecture, BRCT spans 608–698 (EGPGPLDGVV…ADAARALAVP (91 aa)).

This sequence belongs to the NAD-dependent DNA ligase family. LigA subfamily. Mg(2+) is required as a cofactor. Requires Mn(2+) as cofactor.

It carries out the reaction NAD(+) + (deoxyribonucleotide)n-3'-hydroxyl + 5'-phospho-(deoxyribonucleotide)m = (deoxyribonucleotide)n+m + AMP + beta-nicotinamide D-nucleotide.. DNA ligase that catalyzes the formation of phosphodiester linkages between 5'-phosphoryl and 3'-hydroxyl groups in double-stranded DNA using NAD as a coenzyme and as the energy source for the reaction. It is essential for DNA replication and repair of damaged DNA. This is DNA ligase from Parafrankia sp. (strain EAN1pec).